The chain runs to 334 residues: Holliday junction branch migration complex subunit RuvB (334 aa).

Residues 1–182 (MNERMVDQSM…FGVHLRLEYY (182 aa)) form a large ATPase domain (RuvB-L) region. ATP-binding positions include leucine 21, arginine 22, glycine 63, lysine 66, threonine 67, threonine 68, 129–131 (EDF), arginine 172, tyrosine 182, and arginine 219. Residue threonine 67 coordinates Mg(2+). A small ATPAse domain (RuvB-S) region spans residues 183–253 (NESDLKEIII…TTKHALGLLQ (71 aa)). The tract at residues 256-334 (QHGLDYIDHK…HFAKSNEERE (79 aa)) is head domain (RuvB-H). DNA contacts are provided by arginine 292, arginine 311, and arginine 316.

The protein belongs to the RuvB family. As to quaternary structure, homohexamer. Forms an RuvA(8)-RuvB(12)-Holliday junction (HJ) complex. HJ DNA is sandwiched between 2 RuvA tetramers; dsDNA enters through RuvA and exits via RuvB. An RuvB hexamer assembles on each DNA strand where it exits the tetramer. Each RuvB hexamer is contacted by two RuvA subunits (via domain III) on 2 adjacent RuvB subunits; this complex drives branch migration. In the full resolvosome a probable DNA-RuvA(4)-RuvB(12)-RuvC(2) complex forms which resolves the HJ.

It localises to the cytoplasm. The enzyme catalyses ATP + H2O = ADP + phosphate + H(+). In terms of biological role, the RuvA-RuvB-RuvC complex processes Holliday junction (HJ) DNA during genetic recombination and DNA repair, while the RuvA-RuvB complex plays an important role in the rescue of blocked DNA replication forks via replication fork reversal (RFR). RuvA specifically binds to HJ cruciform DNA, conferring on it an open structure. The RuvB hexamer acts as an ATP-dependent pump, pulling dsDNA into and through the RuvAB complex. RuvB forms 2 homohexamers on either side of HJ DNA bound by 1 or 2 RuvA tetramers; 4 subunits per hexamer contact DNA at a time. Coordinated motions by a converter formed by DNA-disengaged RuvB subunits stimulates ATP hydrolysis and nucleotide exchange. Immobilization of the converter enables RuvB to convert the ATP-contained energy into a lever motion, pulling 2 nucleotides of DNA out of the RuvA tetramer per ATP hydrolyzed, thus driving DNA branch migration. The RuvB motors rotate together with the DNA substrate, which together with the progressing nucleotide cycle form the mechanistic basis for DNA recombination by continuous HJ branch migration. Branch migration allows RuvC to scan DNA until it finds its consensus sequence, where it cleaves and resolves cruciform DNA. This is Holliday junction branch migration complex subunit RuvB from Staphylococcus aureus (strain MRSA252).